A 359-amino-acid chain; its full sequence is Protein FLX-like 2 (359 aa).

Over residues 1–16 (MESKGRIHPSHHHMRR) the composition is skewed to basic residues. The interval 1-27 (MESKGRIHPSHHHMRRPLPGPGGCIAH) is disordered. A coiled-coil region spans residues 83 to 236 (HGSLRQELAA…EKLQAQLMNN (154 aa)). The disordered stretch occupies residues 303–359 (TQPGYFPQRPGYNFPRGPPGSYDPTTRLPTGPYGAPFPPGPSNNTPYAGTHGNPSRR).

It belongs to the FLX family. Interacts with FRI.

Functionally, has no transcriptional activation activity. The polypeptide is Protein FLX-like 2 (FLXL2) (Arabidopsis thaliana (Mouse-ear cress)).